A 481-amino-acid polypeptide reads, in one-letter code: Membrane-bound lytic murein transglycosylase F (481 aa).

An N-terminal signal peptide occupies residues 1-21 (MKPLKLNYFFIGIITLLLALA). The non-LT domain stretch occupies residues 22–268 (LWPSIPWRSS…RLEEKYLGHV (247 aa)). An LT domain region spans residues 269–481 (GEFDYVDTTT…PAVPLTKVPE (213 aa)). The active site involves E313.

It in the N-terminal section; belongs to the bacterial solute-binding protein 3 family. In the C-terminal section; belongs to the transglycosylase Slt family.

Its subcellular location is the cell outer membrane. It catalyses the reaction Exolytic cleavage of the (1-&gt;4)-beta-glycosidic linkage between N-acetylmuramic acid (MurNAc) and N-acetylglucosamine (GlcNAc) residues in peptidoglycan, from either the reducing or the non-reducing ends of the peptidoglycan chains, with concomitant formation of a 1,6-anhydrobond in the MurNAc residue.. Murein-degrading enzyme that degrades murein glycan strands and insoluble, high-molecular weight murein sacculi, with the concomitant formation of a 1,6-anhydromuramoyl product. Lytic transglycosylases (LTs) play an integral role in the metabolism of the peptidoglycan (PG) sacculus. Their lytic action creates space within the PG sacculus to allow for its expansion as well as for the insertion of various structures such as secretion systems and flagella. The chain is Membrane-bound lytic murein transglycosylase F from Pectobacterium atrosepticum (strain SCRI 1043 / ATCC BAA-672) (Erwinia carotovora subsp. atroseptica).